A 112-amino-acid chain; its full sequence is Nucleoid-associated protein lpp2803 (112 aa).

This sequence belongs to the YbaB/EbfC family. As to quaternary structure, homodimer.

Its subcellular location is the cytoplasm. The protein localises to the nucleoid. Its function is as follows. Binds to DNA and alters its conformation. May be involved in regulation of gene expression, nucleoid organization and DNA protection. The chain is Nucleoid-associated protein lpp2803 from Legionella pneumophila (strain Paris).